Here is a 459-residue protein sequence, read N- to C-terminus: MDRFKMIKEVGDGTFGSVWRAINKQNGEVVAVKKMKRKYYSFEECMSLREVKSLRRMNHPNIVKLKEVIRENDILYFIMEYMECNLYQLMKDRVKPFSEAEVRNWCFQIFQALAYMHQRGYFHRDLKPENLLVSKDVIKLADFGLAREVTSVPPYTEYVSTRWYRAPEVLLQSSIYDSAVDMWAMGAIMAELLTLHPLFPGTSEADEILKICNVIGSPDEQSWPQGLSLAETMKFQFPQVSGNQLAEVMTSVSSEAVDLISSLCSWDPCKRPKAAEVLQHTFFQGCTFVPPTVRSKAGVLPKTPPCVGVKGVSEHGMPRRYSTGTLSTTKPHSNASLKSSGLSKTGVQRKLQMDRQAPQKIKKPTESNNKLTTNRVPARNSPGHPVLRHSRSLPETGRATMHKVSTLTERLTHMSVTSRTRTTPKPAAPLLKAGLGKSDLLGKTDEIPPAKRLTRKLVS.

Positions 4 to 283 constitute a Protein kinase domain; that stretch reads FKMIKEVGDG…AAEVLQHTFF (280 aa). ATP is bound by residues 10–18 and lysine 33; that span reads VGDGTFGSV. Residue aspartate 125 is the Proton acceptor of the active site. A Phosphoserine modification is found at serine 151. Threonine 156 carries the phosphothreonine modification. The segment at 310-397 is disordered; that stretch reads KGVSEHGMPR…RHSRSLPETG (88 aa). Polar residues-rich tracts occupy residues 322-346 and 366-375; these read STGT…SKTG and ESNNKLTTNR.

The protein belongs to the protein kinase superfamily. CMGC Ser/Thr protein kinase family. CDC2/CDKX subfamily.

The catalysed reaction is L-seryl-[protein] + ATP = O-phospho-L-seryl-[protein] + ADP + H(+). It catalyses the reaction L-threonyl-[protein] + ATP = O-phospho-L-threonyl-[protein] + ADP + H(+). It carries out the reaction [DNA-directed RNA polymerase] + ATP = phospho-[DNA-directed RNA polymerase] + ADP + H(+). This Oryza sativa subsp. japonica (Rice) protein is Cyclin-dependent kinase F-4 (CDKF-4).